The following is a 170-amino-acid chain: Protein SOB FIVE-LIKE 5 (170 aa).

An SOFL-A motif is present at residues 10 to 15; sequence SGWTLY. The tract at residues 17-78 is disordered; sequence DQSVSSPSPS…GPRNISEEDS (62 aa). The span at 35–44 shows a compositional bias: basic and acidic residues; that stretch reads DSRRRSKDSW. Positions 61–70 match the SOFL-B motif; the sequence is SMISDASSGP. The short motif at 79–86 is the Nuclear localization signal element; that stretch reads VKKINIVG.

This sequence belongs to the SOFL plant protein family. As to expression, expressed in seedlings, roots, flowers and siliques. Barely detectable in leaves.

Its subcellular location is the cytoplasm. The protein resides in the nucleus. Involved in cytokinin-mediated development. In Arabidopsis thaliana (Mouse-ear cress), this protein is Protein SOB FIVE-LIKE 5.